A 244-amino-acid chain; its full sequence is Phosphoadenosine 5'-phosphosulfate reductase (244 aa).

Cys-239 acts as the Nucleophile; cysteine thiosulfonate intermediate in catalysis.

This sequence belongs to the PAPS reductase family. CysH subfamily.

It is found in the cytoplasm. It carries out the reaction [thioredoxin]-disulfide + sulfite + adenosine 3',5'-bisphosphate + 2 H(+) = [thioredoxin]-dithiol + 3'-phosphoadenylyl sulfate. The protein operates within sulfur metabolism; hydrogen sulfide biosynthesis; sulfite from sulfate: step 3/3. Catalyzes the formation of sulfite from phosphoadenosine 5'-phosphosulfate (PAPS) using thioredoxin as an electron donor. The chain is Phosphoadenosine 5'-phosphosulfate reductase from Klebsiella pneumoniae (strain 342).